Here is a 414-residue protein sequence, read N- to C-terminus: Glucose-1-phosphate adenylyltransferase (414 aa).

Residues Y103, G168, 183-184, and S201 each bind alpha-D-glucose 1-phosphate; that span reads EK.

The protein belongs to the bacterial/plant glucose-1-phosphate adenylyltransferase family. Homotetramer.

It catalyses the reaction alpha-D-glucose 1-phosphate + ATP + H(+) = ADP-alpha-D-glucose + diphosphate. It functions in the pathway glycan biosynthesis; glycogen biosynthesis. Involved in the biosynthesis of ADP-glucose, a building block required for the elongation reactions to produce glycogen. Catalyzes the reaction between ATP and alpha-D-glucose 1-phosphate (G1P) to produce pyrophosphate and ADP-Glc. The protein is Glucose-1-phosphate adenylyltransferase of Thermus thermophilus (strain ATCC 27634 / DSM 579 / HB8).